Reading from the N-terminus, the 336-residue chain is Holliday junction branch migration complex subunit RuvB (336 aa).

The tract at residues 4–184 is large ATPase domain (RuvB-L); the sequence is ADRLISAGTT…FGIVQRLEFY (181 aa). Residues I23, R24, G65, K68, T69, T70, 131 to 133, R174, Y184, and R221 contribute to the ATP site; that span reads EDY. T69 serves as a coordination point for Mg(2+). The small ATPAse domain (RuvB-S) stretch occupies residues 185-255; it reads QVPDLQYIVS…IAAQALDMLN (71 aa). A head domain (RuvB-H) region spans residues 258–336; the sequence is AEGFDYMDRK…HFGITPPEMP (79 aa). R294, R313, and R318 together coordinate DNA.

This sequence belongs to the RuvB family. In terms of assembly, homohexamer. Forms an RuvA(8)-RuvB(12)-Holliday junction (HJ) complex. HJ DNA is sandwiched between 2 RuvA tetramers; dsDNA enters through RuvA and exits via RuvB. An RuvB hexamer assembles on each DNA strand where it exits the tetramer. Each RuvB hexamer is contacted by two RuvA subunits (via domain III) on 2 adjacent RuvB subunits; this complex drives branch migration. In the full resolvosome a probable DNA-RuvA(4)-RuvB(12)-RuvC(2) complex forms which resolves the HJ.

Its subcellular location is the cytoplasm. The catalysed reaction is ATP + H2O = ADP + phosphate + H(+). Functionally, the RuvA-RuvB-RuvC complex processes Holliday junction (HJ) DNA during genetic recombination and DNA repair, while the RuvA-RuvB complex plays an important role in the rescue of blocked DNA replication forks via replication fork reversal (RFR). RuvA specifically binds to HJ cruciform DNA, conferring on it an open structure. The RuvB hexamer acts as an ATP-dependent pump, pulling dsDNA into and through the RuvAB complex. RuvB forms 2 homohexamers on either side of HJ DNA bound by 1 or 2 RuvA tetramers; 4 subunits per hexamer contact DNA at a time. Coordinated motions by a converter formed by DNA-disengaged RuvB subunits stimulates ATP hydrolysis and nucleotide exchange. Immobilization of the converter enables RuvB to convert the ATP-contained energy into a lever motion, pulling 2 nucleotides of DNA out of the RuvA tetramer per ATP hydrolyzed, thus driving DNA branch migration. The RuvB motors rotate together with the DNA substrate, which together with the progressing nucleotide cycle form the mechanistic basis for DNA recombination by continuous HJ branch migration. Branch migration allows RuvC to scan DNA until it finds its consensus sequence, where it cleaves and resolves cruciform DNA. The chain is Holliday junction branch migration complex subunit RuvB from Shigella boydii serotype 18 (strain CDC 3083-94 / BS512).